Here is a 738-residue protein sequence, read N- to C-terminus: Glycogen [starch] synthase, muscle (738 aa).

A Phosphoserine; by AMPK and PKA modification is found at S8. S11 carries the post-translational modification Phosphoserine. Residue K39 coordinates UDP. Residues H205 and R211 each coordinate UDP-alpha-D-glucose. H291, E292, Q294, H297, and K301 together coordinate alpha-D-glucose 6-phosphate. A UDP-binding site is contributed by R331. Residue R331 coordinates UDP-alpha-D-glucose. S412 carries the phosphoserine modification. Position 501 (H501) interacts with alpha-D-glucose 6-phosphate. Residues E510, W512, and G513 each coordinate UDP-alpha-D-glucose. T515 provides a ligand contact to UDP. Residues R582 and R586 each coordinate alpha-D-glucose 6-phosphate. Positions 632-738 (QGYRYPRPAS…PTSSLGEERN (107 aa)) are disordered. Phosphoserine occurs at positions 641 and 645. S649 carries the post-translational modification Phosphoserine; by GSK3-alpha and GSK3-beta. A phosphoserine mark is found at S652, S653, S657, and S672. Residues 682 to 695 (AKDRRNIRAPEWPR) are compositionally biased toward basic and acidic residues. S698, S709, and S711 each carry phosphoserine. Positions 698–738 (SCSSSTGGSKRSNSVDTGPSSSLSTPTEPLSPTSSLGEERN) are enriched in low complexity. The residue at position 722 (T722) is a Phosphothreonine. A phosphoserine mark is found at S728 and S732.

Belongs to the glycosyltransferase 3 family. In terms of assembly, part of the GYS1-GYG1 complex, a heterooctamer composed of a tetramer of GYS1 and 2 dimers of GYG1, where each GYS1 protomer binds to one GYG1 subunit (via GYG1 C-terminus); the GYS1 tetramer may dissociate from GYG1 dimers to continue glycogen polymerization on its own. Post-translationally, phosphorylation at Ser-8 by AMPK inactivates the enzyme activity. Primed phosphorylation at Ser-657 (site 5) by CSNK2A1 and CSNK2A2 is required for inhibitory phosphorylation at Ser-641 (site 3a), Ser-645 (site 3b), Ser-649 (site 3c) and Ser-653 (site 4) by GSK3A an GSK3B. Phosphorylated at Ser-641 by PASK, leading to inactivation; phosphorylation by PASK is inhibited by glycogen. Phosphorylated at Ser-641 by DYRK2, leading to inactivation. Dephosphorylation at Ser-641 and Ser-645 by PP1 activates the enzyme.

The enzyme catalyses [(1-&gt;4)-alpha-D-glucosyl](n) + UDP-alpha-D-glucose = [(1-&gt;4)-alpha-D-glucosyl](n+1) + UDP + H(+). It functions in the pathway glycan biosynthesis; glycogen biosynthesis. Allosteric activation by glucose-6-phosphate. Phosphorylation reduces the activity towards UDP-glucose. When in the non-phosphorylated state, glycogen synthase does not require glucose-6-phosphate as an allosteric activator; when phosphorylated it does. In terms of biological role, glycogen synthase participates in the glycogen biosynthetic process along with glycogenin and glycogen branching enzyme. Extends the primer composed of a few glucose units formed by glycogenin by adding new glucose units to it. In this context, glycogen synthase transfers the glycosyl residue from UDP-Glc to the non-reducing end of alpha-1,4-glucan. This chain is Glycogen [starch] synthase, muscle (Gys1), found in Rattus norvegicus (Rat).